A 1722-amino-acid chain; its full sequence is Lymphocyte antigen 75 (1722 aa).

Residues 1-27 (MGTRRVTPGCAAGLLVLLLRCFGLAEP) form the signal peptide. Residues 28–1666 (SEFSGDDSFT…VVCKVPLSPD (1639 aa)) lie on the Extracellular side of the membrane. In terms of domain architecture, Ricin B-type lectin spans 32-182 (GDDSFTIVNE…FLVGETWHHD (151 aa)). The N-linked (GlcNAc...) asparagine glycan is linked to N135. The Fibronectin type-II domain maps to 164 to 211 (SYGRPCEFPFLVGETWHHDCIRDENHSGPWCATTLNYEYDQKWGICLK). Cystine bridges form between C169-C194, C183-C209, C247-C340, and C317-C332. Residues 225 to 341 (QIGSCYQFNN…CEAQQPYVCK (117 aa)) enclose the C-type lectin 1 domain. N345 and N377 each carry an N-linked (GlcNAc...) asparagine glycan. 3 C-type lectin domains span residues 368–486 (QNGF…YVCK), 493–625 (NDTR…ICKK), and 652–791 (SNLS…WVCQ). 2 disulfides stabilise this stretch: C389–C485 and C462–C477. N529 is a glycosylation site (N-linked (GlcNAc...) asparagine). 3 disulfides stabilise this stretch: C597–C614, C678–C790, and C752–C782. Residues N843 and N865 are each glycosylated (N-linked (GlcNAc...) asparagine). Y933 is modified (phosphotyrosine). N934 and N1076 each carry an N-linked (GlcNAc...) asparagine glycan. C-type lectin domains lie at 958–1091 (FQNK…LCQK) and 1110–1222 (YLNN…ICYY). Disulfide bonds link C1060–C1080 and C1197–C1211. Residues N1225, N1320, and N1392 are each glycosylated (N-linked (GlcNAc...) asparagine). The C-type lectin 7 domain occupies 1251-1374 (FQNSCYNFMI…VIDETLHFYQ (124 aa)). 2 consecutive C-type lectin domains span residues 1401–1513 (YEDG…ICYK) and 1542–1661 (YGDH…VCKV). Cysteines 1488 and 1502 form a disulfide. N-linked (GlcNAc...) asparagine glycosylation is found at N1593 and N1626. C1635 and C1650 are joined by a disulfide. The chain crosses the membrane as a helical span at residues 1667 to 1691 (YRGIAVLFAVLSVLALISGLIWFLV). At 1692–1722 (QRNHFRWTGLSSVRYEHGANEDEVMLPSFHD) the chain is on the cytoplasmic side. Residues S1703 and S1719 each carry the phosphoserine modification.

Expressed in the thymus and cultured bone marrow cells.

It is found in the membrane. Its function is as follows. Acts as an endocytic receptor to direct captured antigens from the extracellular space to a specialized antigen-processing compartment. Causes reduced proliferation of B lymphocytes. This chain is Lymphocyte antigen 75 (LY75), found in Mesocricetus auratus (Golden hamster).